Reading from the N-terminus, the 404-residue chain is Bifunctional enzyme IspD/IspF (404 aa).

Residues 1–243 are 2-C-methyl-D-erythritol 4-phosphate cytidylyltransferase; sequence MQAEEQFSCG…KLTRMAIPDV (243 aa). Residues 244–404 form a 2-C-methyl-D-erythritol 2,4-cyclodiphosphate synthase region; that stretch reads RTGNGYDVHQ…TVVYASGGDA (161 aa). 2 residues coordinate a divalent metal cation: Asp-250 and His-252. Residues 250–252 and 276–277 contribute to the 4-CDP-2-C-methyl-D-erythritol 2-phosphate site; these read DVH and HS. Position 284 (His-284) interacts with a divalent metal cation. 4-CDP-2-C-methyl-D-erythritol 2-phosphate-binding positions include 298 to 300, 374 to 377, Phe-381, and Arg-384; these read DIG and TTNE.

The protein in the N-terminal section; belongs to the IspD/TarI cytidylyltransferase family. IspD subfamily. It in the C-terminal section; belongs to the IspF family. A divalent metal cation serves as cofactor.

It carries out the reaction 2-C-methyl-D-erythritol 4-phosphate + CTP + H(+) = 4-CDP-2-C-methyl-D-erythritol + diphosphate. It catalyses the reaction 4-CDP-2-C-methyl-D-erythritol 2-phosphate = 2-C-methyl-D-erythritol 2,4-cyclic diphosphate + CMP. The protein operates within isoprenoid biosynthesis; isopentenyl diphosphate biosynthesis via DXP pathway; isopentenyl diphosphate from 1-deoxy-D-xylulose 5-phosphate: step 2/6. It participates in isoprenoid biosynthesis; isopentenyl diphosphate biosynthesis via DXP pathway; isopentenyl diphosphate from 1-deoxy-D-xylulose 5-phosphate: step 4/6. In terms of biological role, bifunctional enzyme that catalyzes the formation of 4-diphosphocytidyl-2-C-methyl-D-erythritol from CTP and 2-C-methyl-D-erythritol 4-phosphate (MEP) (IspD), and catalyzes the conversion of 4-diphosphocytidyl-2-C-methyl-D-erythritol 2-phosphate (CDP-ME2P) to 2-C-methyl-D-erythritol 2,4-cyclodiphosphate (ME-CPP) with a corresponding release of cytidine 5-monophosphate (CMP) (IspF). This is Bifunctional enzyme IspD/IspF from Sinorhizobium medicae (strain WSM419) (Ensifer medicae).